Consider the following 898-residue polypeptide: Serine/threonine-protein kinase TAO3 (898 aa).

The Protein kinase domain maps to 24 to 277; that stretch reads FIGLHEIGHG…SAELLRHDFV (254 aa). Residues 30–38 and Lys53 each bind ATP; that span reads IGHGSFGAV. Residue Asp147 is the Proton acceptor of the active site. Disordered regions lie at residues 316 to 362 and 405 to 425; these read TRNG…SQSS and DEAG…VQSQ. Ser324 carries the post-translational modification Phosphoserine; by ATM. 4 positions are modified to phosphoserine: Ser331, Ser343, Ser346, and Ser349. Residues 334–351 show a composition bias toward polar residues; it reads GTSLNREMDSLGSNHSIP. The segment covering 352 to 362 has biased composition (low complexity); that stretch reads SMSVSTGSQSS. A Phosphothreonine modification is found at Thr357. Ser359 is modified (phosphoserine). Positions 405 to 416 are enriched in basic and acidic residues; it reads DEAGHGDPRPEP. A Phosphoserine modification is found at Ser442. Coiled-coil stretches lie at residues 452–502, 548–649, and 754–879; these read EQEN…THAN, FLES…HAML, and LKTL…DMES. A disordered region spans residues 565–596; it reads EEMNEDHSTPKKEKQERISKHKENLQHTQAEE. An N6-acetyllysine modification is found at Lys830.

This sequence belongs to the protein kinase superfamily. STE Ser/Thr protein kinase family. STE20 subfamily. Self-associates. Interacts with ERN1 and TRAF2. Interaction with TRAF2 is facilitated under ER stress conditions, such as treatment with tunicamycin, and may promote TRAF2 phosphorylation. Interacts (via N-terminus) with STK25; the interaction promotes STK25 abundance at the level of protein expression and/or stability. As to quaternary structure, (Microbial infection) Interacts with herpes simplex virus 1 UL37 protein. Autophosphorylated. Phosphorylation at Ser-324 by ATM following DNA damage is required for activation of the p38/MAPK14 stress-activated MAPK cascade. Phosphorylated at Ser-324 and on Tyr residues during T cell activation. Phosphorylated by LRRK2. Ubiquitously expressed at a low level, and highly expressed in peripheral blood leukocytes (PBLs), thymus, spleen, kidney, skeletal muscle, heart and liver.

The protein localises to the cytoplasm. Its subcellular location is the cell membrane. The protein resides in the membrane raft. It is found in the lipid droplet. The enzyme catalyses L-seryl-[protein] + ATP = O-phospho-L-seryl-[protein] + ADP + H(+). It catalyses the reaction L-threonyl-[protein] + ATP = O-phospho-L-threonyl-[protein] + ADP + H(+). Its function is as follows. Serine/threonine-protein kinase that acts as a regulator of the p38/MAPK14 stress-activated MAPK cascade and of the MAPK8/JNK cascade. In response to DNA damage, involved in the G2/M transition DNA damage checkpoint by activating the p38/MAPK14 stress-activated MAPK cascade, probably by mediating phosphorylation of upstream MAP2K3 and MAP2K6 kinases. Inhibits basal activity of the MAPK8/JNK cascade and diminishes its activation in response to epidermal growth factor (EGF). Positively regulates canonical T cell receptor (TCR) signaling by preventing early PTPN6/SHP1-mediated inactivation of LCK, ensuring sustained TCR signaling that is required for optimal activation and differentiation of T cells. Phosphorylates PTPN6/SHP1 on 'Thr-394', leading to its polyubiquitination and subsequent proteasomal degradation. Required for cell surface expression of metalloprotease ADAM10 on type 1 transitional B cells which is necessary for their NOTCH-mediated development into marginal zone B cells. Also required for the NOTCH-mediated terminal differentiation of splenic conventional type 2 dendritic cells. Positively regulates osteoblast differentiation by acting as an upstream activator of the JNK pathway. Promotes JNK signaling in hepatocytes and positively regulates hepatocyte lipid storage by inhibiting beta-oxidation and triacylglycerol secretion while enhancing lipid synthesis. Restricts age-associated inflammation by negatively regulating differentiation of macrophages and their production of pro-inflammatory cytokines. Plays a role in negatively regulating the abundance of regulatory T cells in white adipose tissue. In Homo sapiens (Human), this protein is Serine/threonine-protein kinase TAO3 (TAOK3).